The primary structure comprises 396 residues: Alpha-galactosidase 2 (396 aa).

Positions 1-25 (MVLLSFSLRFIAFTLTITLTQIADG) are cleaved as a signal peptide. 2 disulfides stabilise this stretch: Cys-52–Cys-84 and Cys-132–Cys-163. Asn-55 is a glycosylation site (N-linked (GlcNAc...) asparagine). Residues 82-83 (DD) and Lys-159 each bind substrate. Asp-161 serves as the catalytic Nucleophile. Residues 194–198 (EWGQE), Arg-212, and Asp-216 each bind substrate. Catalysis depends on Asp-216, which acts as the Proton donor. N-linked (GlcNAc...) asparagine glycosylation is found at Asn-343 and Asn-354.

The protein belongs to the glycosyl hydrolase 27 family. As to quaternary structure, homodimer.

It localises to the secreted. It is found in the cell wall. The protein resides in the extracellular space. The protein localises to the apoplast. It catalyses the reaction Hydrolysis of terminal, non-reducing alpha-D-galactose residues in alpha-D-galactosides, including galactose oligosaccharides, galactomannans and galactolipids.. Its function is as follows. May regulate leaf (and possibly other organ) development by functioning in cell wall loosening and cell wall expansion. In Arabidopsis thaliana (Mouse-ear cress), this protein is Alpha-galactosidase 2.